A 194-amino-acid polypeptide reads, in one-letter code: Probable GTP-binding protein EngB (194 aa).

One can recognise an EngB-type G domain in the interval 22–194; sequence DLPEYALAGR…AWQFIKEGME (173 aa). Residues 30–37, 57–61, 75–78, 142–145, and 174–176 each bind GTP; these read GRSNVGKS, GKTQT, DVPG, TKAD, and FSS. The Mg(2+) site is built by S37 and T59.

The protein belongs to the TRAFAC class TrmE-Era-EngA-EngB-Septin-like GTPase superfamily. EngB GTPase family. Mg(2+) is required as a cofactor.

Necessary for normal cell division and for the maintenance of normal septation. This Listeria welshimeri serovar 6b (strain ATCC 35897 / DSM 20650 / CCUG 15529 / CIP 8149 / NCTC 11857 / SLCC 5334 / V8) protein is Probable GTP-binding protein EngB.